A 288-amino-acid polypeptide reads, in one-letter code: Bifunctional protein FolD (288 aa).

Residues 166–168 (GAS) and Ile232 contribute to the NADP(+) site.

It belongs to the tetrahydrofolate dehydrogenase/cyclohydrolase family. As to quaternary structure, homodimer.

The catalysed reaction is (6R)-5,10-methylene-5,6,7,8-tetrahydrofolate + NADP(+) = (6R)-5,10-methenyltetrahydrofolate + NADPH. It carries out the reaction (6R)-5,10-methenyltetrahydrofolate + H2O = (6R)-10-formyltetrahydrofolate + H(+). It functions in the pathway one-carbon metabolism; tetrahydrofolate interconversion. Its function is as follows. Catalyzes the oxidation of 5,10-methylenetetrahydrofolate to 5,10-methenyltetrahydrofolate and then the hydrolysis of 5,10-methenyltetrahydrofolate to 10-formyltetrahydrofolate. This is Bifunctional protein FolD from Shigella dysenteriae serotype 1 (strain Sd197).